A 236-amino-acid chain; its full sequence is Phosphoribosylaminoimidazole-succinocarboxamide synthase (236 aa).

Belongs to the SAICAR synthetase family.

It carries out the reaction 5-amino-1-(5-phospho-D-ribosyl)imidazole-4-carboxylate + L-aspartate + ATP = (2S)-2-[5-amino-1-(5-phospho-beta-D-ribosyl)imidazole-4-carboxamido]succinate + ADP + phosphate + 2 H(+). The protein operates within purine metabolism; IMP biosynthesis via de novo pathway; 5-amino-1-(5-phospho-D-ribosyl)imidazole-4-carboxamide from 5-amino-1-(5-phospho-D-ribosyl)imidazole-4-carboxylate: step 1/2. The sequence is that of Phosphoribosylaminoimidazole-succinocarboxamide synthase from Rickettsia bellii (strain OSU 85-389).